Reading from the N-terminus, the 295-residue chain is Acetylglutamate kinase (295 aa).

Substrate-binding positions include 66 to 67 (GG), R88, and N193.

This sequence belongs to the acetylglutamate kinase family. ArgB subfamily.

It localises to the cytoplasm. The catalysed reaction is N-acetyl-L-glutamate + ATP = N-acetyl-L-glutamyl 5-phosphate + ADP. It functions in the pathway amino-acid biosynthesis; L-arginine biosynthesis; N(2)-acetyl-L-ornithine from L-glutamate: step 2/4. Catalyzes the ATP-dependent phosphorylation of N-acetyl-L-glutamate. This is Acetylglutamate kinase from Rhizobium etli (strain CIAT 652).